We begin with the raw amino-acid sequence, 129 residues long: Flagellar assembly factor FliW 2 (129 aa).

The protein belongs to the FliW family. Interacts with translational regulator CsrA and flagellin(s).

It is found in the cytoplasm. In terms of biological role, acts as an anti-CsrA protein, binds CsrA and prevents it from repressing translation of its target genes, one of which is flagellin. Binds to flagellin and participates in the assembly of the flagellum. This chain is Flagellar assembly factor FliW 2, found in Helicobacter pylori (strain J99 / ATCC 700824) (Campylobacter pylori J99).